The following is a 384-amino-acid chain: Viral protein 1 (384 aa).

This chain is Viral protein 1, found in Chaetoceros setoense (Chaetoceros setoense DNA virus).